Here is a 91-residue protein sequence, read N- to C-terminus: MTEQQILDKVQSIVSEQLGVERSQISPNASFTHDLGADSLDNVELVMAMEEEFDLEIPDSAAEQITTIQQAVDYILQHKKSLSQNNLSQNN.

In terms of domain architecture, Carrier spans 4 to 79; sequence QQILDKVQSI…QAVDYILQHK (76 aa). Serine 39 carries the post-translational modification O-(pantetheine 4'-phosphoryl)serine.

Belongs to the acyl carrier protein (ACP) family. 4'-phosphopantetheine is transferred from CoA to a specific serine of apo-ACP by AcpS. This modification is essential for activity because fatty acids are bound in thioester linkage to the sulfhydryl of the prosthetic group.

The protein resides in the plastid. Its subcellular location is the chloroplast. The protein operates within lipid metabolism; fatty acid biosynthesis. Its function is as follows. Carrier of the growing fatty acid chain in fatty acid biosynthesis. The chain is Acyl carrier protein from Cyanidioschyzon merolae (strain NIES-3377 / 10D) (Unicellular red alga).